Consider the following 526-residue polypeptide: Arginine/ornithine antiporter ArcD1 (526 aa).

14 consecutive transmembrane segments (helical) span residues 8–28 (GIGL…GGVF), 41–61 (GGVV…VLSL), 88–108 (FISG…FAVL), 128–148 (LTIL…LLVM), 160–180 (IVLV…IVTF), 220–240 (VKGS…AAMM), 255–275 (IFGL…PFGF), 297–317 (VGGW…LGAW), 354–374 (LLLT…VADA), 378–398 (FVYL…LYLF), 407–427 (TSNI…LYYS), 428–448 (GWQF…LYAL), 466–486 (FILT…WLGL), and 495–515 (NTLL…YFVV).

It belongs to the amino acid-polyamine-organocation (APC) superfamily. Basic amino acid/polyamine antiporter (APA) (TC 2.A.3.2) family.

The protein resides in the cell membrane. The enzyme catalyses L-ornithine(in) + L-arginine(out) = L-ornithine(out) + L-arginine(in). Functionally, catalyzes electroneutral exchange between L-arginine and L-ornithine. Can also efficiently translocate L-histidine and L-lysine. ArcD1 is the main L-arginine/L-ornithine exchanger in the arginine deiminase (ADI) pathway. The polypeptide is Arginine/ornithine antiporter ArcD1 (Lactococcus lactis subsp. cremoris (strain MG1363)).